We begin with the raw amino-acid sequence, 96 residues long: UPF0213 protein BCE_0033 (96 aa).

Residues 4–79 (NKHCFYVVEC…KQLNRKQKEE (76 aa)) form the GIY-YIG domain.

This sequence belongs to the UPF0213 family.

The sequence is that of UPF0213 protein BCE_0033 from Bacillus cereus (strain ATCC 10987 / NRS 248).